A 637-amino-acid chain; its full sequence is Early transcription factor 70 kDa subunit (637 aa).

Positions 32 to 185 constitute a Helicase ATP-binding domain; sequence RTIIDENRSV…GHIIDLMSEE (154 aa). Residue 45 to 52 coordinates ATP; it reads HIMGSGKT. The DEXH box signature appears at 135-138; that stretch reads DEAH. Residues 327-507 enclose the Helicase C-terminal domain; it reads KFKYFINRIQ…VLPFDIKKLL (181 aa).

The protein belongs to the helicase family. VETF subfamily. In terms of assembly, heterodimer of a 70 kDa and a 82 kDa subunit. Part of the early transcription complex composed of ETF, RAP94/OPG109, and the DNA-directed RNA polymerase.

Its subcellular location is the virion. Acts with RNA polymerase to initiate transcription from early gene promoters. Is recruited by the RPO-associated protein of 94 kDa RAP94/OPG109 to form the early transcription complex, which also contains the core RNA polymerase. ETF heterodimer binds to early gene promoters. The protein is Early transcription factor 70 kDa subunit (OPG118) of Homo sapiens (Human).